The chain runs to 763 residues: Phosphoglycerol transferase I (763 aa).

4 helical membrane-spanning segments follow: residues 1–21 (MSEL…AWKA), 24–44 (NTWW…LNIT), 77–97 (ILPG…LGWI), and 108–128 (VGYS…SPAF).

It belongs to the OpgB family.

It localises to the cell inner membrane. It catalyses the reaction a phosphatidylglycerol + a membrane-derived-oligosaccharide D-glucose = a 1,2-diacyl-sn-glycerol + a membrane-derived-oligosaccharide 6-(glycerophospho)-D-glucose.. It participates in glycan metabolism; osmoregulated periplasmic glucan (OPG) biosynthesis. Transfers a phosphoglycerol residue from phosphatidylglycerol to the membrane-bound nascent glucan backbones. This is Phosphoglycerol transferase I from Salmonella arizonae (strain ATCC BAA-731 / CDC346-86 / RSK2980).